Reading from the N-terminus, the 520-residue chain is AAA-ATPase At5g57480 (520 aa).

Residues 1–24 (MKEYWTSLASLLGVLAFCQSLMQS) form the signal peptide. 244–251 (GPPGTGKS) is an ATP binding site. Disordered regions lie at residues 307–340 (KKNS…EEGG) and 467–520 (NVKD…TRED). Residues 328-340 (SGSGSGGSGEEGG) show a composition bias toward gly residues. Residues 497-512 (QNEDEDHDEEEIELED) are compositionally biased toward acidic residues.

Belongs to the AAA ATPase family. BCS1 subfamily. Mg(2+) is required as a cofactor.

It catalyses the reaction ATP + H2O = ADP + phosphate + H(+). The polypeptide is AAA-ATPase At5g57480 (Arabidopsis thaliana (Mouse-ear cress)).